A 1749-amino-acid polypeptide reads, in one-letter code: Intraflagellar transport protein 172 homolog (1749 aa).

M1 carries the post-translational modification N-acetylmethionine. K4 participates in a covalent cross-link: Glycyl lysine isopeptide (Lys-Gly) (interchain with G-Cter in SUMO1). WD repeat units lie at residues D14–F53, R64–K103, I110–I148, G150–G191, N195–D233, P238–A278, T284–K323, S483–T520, and M521–T559. The TPR 1 repeat unit spans residues D593–T624. R672 is subject to Omega-N-methylarginine. TPR repeat units lie at residues E692 to I725, G809 to V842, V854 to I887, S912 to I945, M947 to V970, S971 to I1004, E1042 to Y1075, P1142 to V1175, V1276 to G1309, I1345 to K1378, G1411 to Y1445, A1447 to N1477, and D1574 to I1607.

Belongs to the IFT172 family. In terms of assembly, interacts with IFT88. Interacts with IFT57. Interacts with RABL2/RABL2A; binds preferentially to GDP-bound RABL2.

It localises to the cell projection. It is found in the cilium. Its function is as follows. Required for the maintenance and formation of cilia. Plays an indirect role in hedgehog (Hh) signaling, cilia being required for all activity of the hedgehog pathway. The sequence is that of Intraflagellar transport protein 172 homolog (IFT172) from Homo sapiens (Human).